A 57-amino-acid chain; its full sequence is Large ribosomal subunit protein bL32 (57 aa).

The span at 1–20 (MAVPKKKTSKAKRDQRRATW) shows a compositional bias: basic residues. Positions 1–24 (MAVPKKKTSKAKRDQRRATWRRQA) are disordered.

It belongs to the bacterial ribosomal protein bL32 family.

The sequence is that of Large ribosomal subunit protein bL32 from Gloeothece citriformis (strain PCC 7424) (Cyanothece sp. (strain PCC 7424)).